Reading from the N-terminus, the 213-residue chain is Orotate phosphoribosyltransferase (213 aa).

Lys-26 is a binding site for 5-phospho-alpha-D-ribose 1-diphosphate. 34-35 is a binding site for orotate; it reads FF. Residues 72–73, Arg-99, Lys-100, Lys-103, His-105, and 124–132 contribute to the 5-phospho-alpha-D-ribose 1-diphosphate site; these read YK and DDVITAGTA. Orotate-binding residues include Thr-128 and Arg-156.

This sequence belongs to the purine/pyrimidine phosphoribosyltransferase family. PyrE subfamily. As to quaternary structure, homodimer. Requires Mg(2+) as cofactor.

It carries out the reaction orotidine 5'-phosphate + diphosphate = orotate + 5-phospho-alpha-D-ribose 1-diphosphate. The protein operates within pyrimidine metabolism; UMP biosynthesis via de novo pathway; UMP from orotate: step 1/2. In terms of biological role, catalyzes the transfer of a ribosyl phosphate group from 5-phosphoribose 1-diphosphate to orotate, leading to the formation of orotidine monophosphate (OMP). The polypeptide is Orotate phosphoribosyltransferase (Yersinia enterocolitica serotype O:8 / biotype 1B (strain NCTC 13174 / 8081)).